The chain runs to 91 residues: Probable Fe(2+)-trafficking protein (91 aa).

Belongs to the Fe(2+)-trafficking protein family. In terms of assembly, monomer.

In terms of biological role, could be a mediator in iron transactions between iron acquisition and iron-requiring processes, such as synthesis and/or repair of Fe-S clusters in biosynthetic enzymes. The chain is Probable Fe(2+)-trafficking protein from Cronobacter sakazakii (strain ATCC BAA-894) (Enterobacter sakazakii).